Here is a 71-residue protein sequence, read N- to C-terminus: Sec-independent protein translocase protein TatA (71 aa).

A helical membrane pass occupies residues 1–21 (MGSFSMGHWLIVLAIIVLLFG). Residues 41 to 57 (KEMEDETPVEKIEKADS) are compositionally biased toward basic and acidic residues. Residues 41–71 (KEMEDETPVEKIEKADSETQSTKQNETTKNV) form a disordered region. Positions 58–71 (ETQSTKQNETTKNV) are enriched in polar residues.

The protein belongs to the TatA/E family. As to quaternary structure, the Tat system comprises two distinct complexes: a TatABC complex, containing multiple copies of TatA, TatB and TatC subunits, and a separate TatA complex, containing only TatA subunits. Substrates initially bind to the TatABC complex, which probably triggers association of the separate TatA complex to form the active translocon.

The protein resides in the cell inner membrane. Part of the twin-arginine translocation (Tat) system that transports large folded proteins containing a characteristic twin-arginine motif in their signal peptide across membranes. TatA could form the protein-conducting channel of the Tat system. The protein is Sec-independent protein translocase protein TatA of Campylobacter fetus subsp. fetus (strain 82-40).